Consider the following 158-residue polypeptide: Botcinic acid biosynthesis cluster B protein 16 (158 aa).

Its pathway is polyketide biosynthesis. Its function is as follows. Part of the gene cluster B that mediates the biosynthesis of botcinic acid and its botcinin derivatives, acetate-derived polyketides that contribute to virulence when combined with the sesquiterpene botrydial. Botcinic acid and its derivatives have been shown to induce chlorosis and necrosis during host plant infection, but also have antifungal activities. Two polyketide synthases, BOA6 and BOA9, are involved in the biosynthesis of botcinins. BOA6 mediates the formation of the per-methylated tetraketide core by condensation of four units of malonyl-CoA with one unit of acetyl-CoA, which would be methylated in activated methylene groups to yield a bicyclic acid intermediate that could then either be converted to botrylactone derivatives or lose the starter acetate unit through a retro-Claisen type C-C bond cleavage to yield botcinin derivatives. The second polyketide synthase, BOA9, is probably required for the biosynthesis of the tetraketide side chain of botcinins. The methyltransferase (MT) domain within BOA6 is probably responsible for the incorporation of four methyl groups. The trans-enoyl reductase BOA5 might take over the enoyl reductase function of BOA6 that misses an ER domain. The monooxygenases BOA2, BOA3 and BOA4 might be involved in further hydroxylations at C4, C5 and C8, whereas BOA7, close to BOA9, could potentially be involved in the hydroxylation at C4 in the side chain of botcinins. The polypeptide is Botcinic acid biosynthesis cluster B protein 16 (Botryotinia fuckeliana (strain B05.10) (Noble rot fungus)).